Here is a 293-residue protein sequence, read N- to C-terminus: 33 kDa chaperonin (293 aa).

Disulfide bonds link cysteine 231–cysteine 233 and cysteine 264–cysteine 267.

This sequence belongs to the HSP33 family. Under oxidizing conditions two disulfide bonds are formed involving the reactive cysteines. Under reducing conditions zinc is bound to the reactive cysteines and the protein is inactive.

The protein resides in the cytoplasm. In terms of biological role, redox regulated molecular chaperone. Protects both thermally unfolding and oxidatively damaged proteins from irreversible aggregation. Plays an important role in the bacterial defense system toward oxidative stress. This Yersinia pseudotuberculosis serotype O:1b (strain IP 31758) protein is 33 kDa chaperonin.